The following is a 312-amino-acid chain: 1-phosphofructokinase (312 aa).

Residues 223–228 and 254–255 each bind ATP; these read SLGAEG and GD. The active-site Proton acceptor is Asp255.

This sequence belongs to the carbohydrate kinase PfkB family.

The enzyme catalyses beta-D-fructose 1-phosphate + ATP = beta-D-fructose 1,6-bisphosphate + ADP + H(+). Catalyzes the ATP-dependent phosphorylation of fructose-l-phosphate to fructose-l,6-bisphosphate. The polypeptide is 1-phosphofructokinase (fruK) (Escherichia coli O157:H7).